We begin with the raw amino-acid sequence, 128 residues long: Large ribosomal subunit protein bL17 (128 aa).

The protein belongs to the bacterial ribosomal protein bL17 family. As to quaternary structure, part of the 50S ribosomal subunit. Contacts protein L32.

The chain is Large ribosomal subunit protein bL17 from Haemophilus influenzae (strain 86-028NP).